Reading from the N-terminus, the 158-residue chain is Putative pre-16S rRNA nuclease (158 aa).

The interval 138–158 (ELKPAQQTASRSGAGAGDGGS) is disordered.

It belongs to the YqgF nuclease family.

Its subcellular location is the cytoplasm. Could be a nuclease involved in processing of the 5'-end of pre-16S rRNA. In Synechococcus sp. (strain CC9605), this protein is Putative pre-16S rRNA nuclease.